Here is a 661-residue protein sequence, read N- to C-terminus: Serine/threonine-protein phosphatase rdgC (661 aa).

An IQ domain is found at 7–32; it reads RAAIFIQKWYRRHQARREMQRRCNWQ. The segment at 105-413 is catalytic; sequence IDLLIDVFRK…HFVQYISAAS (309 aa). The Mn(2+) site is built by Asp-158, His-160, Asp-187, and Asn-219. The Proton donor role is filled by His-220. Residues His-271 and His-360 each contribute to the Mn(2+) site. EF-hand domains lie at 441–476, 526–561, and 566–601; these read DHRD…VTKL, ANKA…LVAH, and YSKA…SDLH. Residues Asp-539, Asp-541, Ser-543, Glu-545, Glu-550, Asp-579, Asn-581, Asp-583, Lys-585, and Glu-590 each contribute to the Ca(2+) site. The segment at 606 to 625 is disordered; sequence QDENIRRRSTGRPSVAKTAT.

This sequence belongs to the PPP phosphatase family. It depends on Mn(2+) as a cofactor. As to expression, expressed in the visual system of the fly, as well as in the mushroom bodies of the central brain.

It catalyses the reaction O-phospho-L-seryl-[protein] + H2O = L-seryl-[protein] + phosphate. It carries out the reaction O-phospho-L-threonyl-[protein] + H2O = L-threonyl-[protein] + phosphate. Functionally, phosphatase required to prevent light-induced retinal degeneration. The polypeptide is Serine/threonine-protein phosphatase rdgC (rdgC) (Drosophila melanogaster (Fruit fly)).